The chain runs to 89 residues: Small ribosomal subunit protein uS15 (89 aa).

This sequence belongs to the universal ribosomal protein uS15 family. Part of the 30S ribosomal subunit. Forms a bridge to the 50S subunit in the 70S ribosome, contacting the 23S rRNA.

In terms of biological role, one of the primary rRNA binding proteins, it binds directly to 16S rRNA where it helps nucleate assembly of the platform of the 30S subunit by binding and bridging several RNA helices of the 16S rRNA. Its function is as follows. Forms an intersubunit bridge (bridge B4) with the 23S rRNA of the 50S subunit in the ribosome. The chain is Small ribosomal subunit protein uS15 from Rhizobium johnstonii (strain DSM 114642 / LMG 32736 / 3841) (Rhizobium leguminosarum bv. viciae).